We begin with the raw amino-acid sequence, 991 residues long: MLWPAALVAMFALAARAREIDNVTCSVVYGSNVARISKDYWLAQEGSLVSFMTFENDDPVYFFMGRALGTGASGGKYLYRVTRDNNTNVSHVQTSLFIPEHFNGGILLDMGSNYTHDAETDPEFLNARYLVVNDTEDSVREETLGPCPEMLRTLDVSGRTTLLYPSRYLHARDRMQVEKTMDTAKCVSTSVNLDATVVFSVDFPFSERAILRVTQTFYPDDRPQKHLLYLASQGGKTVHYSEVSATVTPLPGGNASFNVTIEFTDQPDDTTIHLWVSPKGINDDPDAVSAYYILNSLSSYDDPYAHEEISCDSVYQNIVMVLGSVVNITSPDPLPRAPDYSYPTDDPAGETTESAVTWLEATAQTADEATTPLAAHATDGYEPTTAAATLSTTEDLTQETSTPTVTTVIDPTSGAVTTESRTTEGTAANVATTEAAGTEGQNQEATTAGGPTNAATTLGHQTIEAATVEDSTTTARAAEYPTPTTTTVEPRPAGGTTIEDPTDSPAIEDTTTPTTTAAKVTALKTAAAEGPTPCVTTYTGSDTEAAQSATSISDAVTPEDLTPETTTPVDWSVTSTYISVADGTSMPAPTPSAVAHEASTTPAPTATAVPTSHTPKPQESTSTPSRAPTTGVAPVTANSLSPAATSSERIVILNTATASSGPGASTGATTAPISPPWSASPAGDGVTTSAARTLEPSSTRKAVAAESTTAADDVATSELGSGDYGDHATEPPRIVITNPPGITTLHDADAAEEDPWPTRPLYSVNIVNATLTANGMLTATCMAAAKAKHAITFTWHVGSNMVPAITGPPEPGLMFNGNRAWSSRLQTVEYGISPSARLACMACTVPPAQRYCAHDVAVVARHDRLELDMQVDVATVSVVCSGLDGVESEPYFVWTANGRPVPLGSVRTKRIPNDYGTPARWQSAIHISRFFVPAGHRDVYECTATLASGETIKATKNWSNTDYLALQKNAAARSTFVVAGGITAFAVAELL.

Residues methionine 1–alanine 17 form the signal peptide. Disordered regions lie at residues aspartate 332–threonine 352, threonine 392–glycine 425, glutamate 469–threonine 511, aspartate 542–valine 569, proline 587–serine 641, and alanine 658–isoleucine 734. A compositionally biased stretch (low complexity) spans threonine 400–serine 413. The segment covering glycine 414–glycine 425 has biased composition (polar residues). The segment covering threonine 472–alanine 493 has biased composition (low complexity). The span at aspartate 542–aspartate 554 shows a compositional bias: polar residues. Composition is skewed to low complexity over residues valine 556–valine 569 and alanine 598–proline 615. Composition is skewed to polar residues over residues proline 617 to proline 628 and alanine 658 to glycine 667. Over residues alanine 668–alanine 682 the composition is skewed to low complexity. Positions valine 686–alanine 710 are enriched in polar residues.

This is an uncharacterized protein from Psittacid herpesvirus 1 (isolate Amazon parrot/-/97-0001/1997) (PsHV-1).